Reading from the N-terminus, the 195-residue chain is Protein SYM1 (195 aa).

4 helical membrane-spanning segments follow: residues 21–39 (GIMT…QVGF), 55–71 (AVVY…DSWY), 98–115 (LLFA…MSIL), and 159–175 (LFSV…FLSF).

The protein belongs to the peroxisomal membrane protein PXMP2/4 family.

The protein resides in the mitochondrion inner membrane. Functionally, may be involved in cellular response to stress. Required to maintain mitochondrial DNA (mtDNA) integrity and stability. The sequence is that of Protein SYM1 (SYM1) from Kluyveromyces lactis (strain ATCC 8585 / CBS 2359 / DSM 70799 / NBRC 1267 / NRRL Y-1140 / WM37) (Yeast).